A 632-amino-acid chain; its full sequence is Chaperone protein HtpG (632 aa).

Positions 1-345 are a; substrate-binding; sequence MTTAAHAETL…SKDLSLNVSR (345 aa). A b region spans residues 346 to 561; sequence ELLQKDPQVD…EHDMGYQMRR (216 aa). Positions 562–632 are c; sequence LMEAAGQPLP…VQRLNKLLSH (71 aa).

This sequence belongs to the heat shock protein 90 family. As to quaternary structure, homodimer.

It localises to the cytoplasm. In terms of biological role, molecular chaperone. Has ATPase activity. The sequence is that of Chaperone protein HtpG from Chromohalobacter salexigens (strain ATCC BAA-138 / DSM 3043 / CIP 106854 / NCIMB 13768 / 1H11).